A 166-amino-acid polypeptide reads, in one-letter code: PTS system glucose-specific EIIA component (166 aa).

The 105-residue stretch at 34–138 (DPVFAQKMMG…SVISPIIITN (105 aa)) folds into the PTS EIIA type-1 domain. The Zn(2+) site is built by His71 and His86. His86 serves as the catalytic Tele-phosphohistidine intermediate; for EIIA activity. At His86 the chain carries Phosphohistidine; by HPr.

As to quaternary structure, heterodimer with glycerol kinase (glpk). Zn(2+) serves as cofactor.

It localises to the cytoplasm. The phosphoenolpyruvate-dependent sugar phosphotransferase system (sugar PTS), a major carbohydrate active transport system, catalyzes the phosphorylation of incoming sugar substrates concomitantly with their translocation across the cell membrane. The enzyme II complex composed of PtsG and Crr is involved in glucose transport. The chain is PTS system glucose-specific EIIA component (crr) from Staphylococcus aureus (strain MSSA476).